Reading from the N-terminus, the 990-residue chain is Serine/threonine-protein kinase ATG1 (990 aa).

The region spanning 15-334 is the Protein kinase domain; it reads FVIENEIGKG…FDDFFASPVI (320 aa). Residues 21–29 and lysine 44 each bind ATP; that span reads IGKGSFAVV. Aspartate 165 serves as the catalytic Proton acceptor. Residues 375 to 408 show a composition bias toward polar residues; the sequence is VSSIEASTQQPGVQPPVSTATSPPALESRSTQEA. Disordered stretches follow at residues 375–499, 529–566, 579–614, 750–784, and 970–990; these read VSSI…GGED, SRLG…TILS, ASTG…QGGQ, LSQE…SSSS, and SPVG…TESP. 2 stretches are compositionally biased toward low complexity: residues 529–554 and 587–613; these read SRLG…SAPG and PPGS…RQGG. The span at 750–771 shows a compositional bias: polar residues; it reads LSQELDSSTATSGISPSRNSVQ. The span at 772–784 shows a compositional bias: low complexity; sequence GSARRVGSISSSS.

The protein belongs to the protein kinase superfamily. Ser/Thr protein kinase family. APG1/unc-51/ULK1 subfamily. As to quaternary structure, homodimer. Forms a ternary complex with ATG13 and ATG17.

The protein localises to the cytoplasm. The protein resides in the preautophagosomal structure membrane. It catalyses the reaction L-seryl-[protein] + ATP = O-phospho-L-seryl-[protein] + ADP + H(+). It carries out the reaction L-threonyl-[protein] + ATP = O-phospho-L-threonyl-[protein] + ADP + H(+). Its function is as follows. Serine/threonine protein kinase involved in the cytoplasm to vacuole transport (Cvt) and found to be essential in autophagy, where it is required for the formation of autophagosomes. Involved in the clearance of protein aggregates which cannot be efficiently cleared by the proteasome. Required for selective autophagic degradation of the nucleus (nucleophagy) as well as for mitophagy which contributes to regulate mitochondrial quantity and quality by eliminating the mitochondria to a basal level to fulfill cellular energy requirements and preventing excess ROS production. Also involved in endoplasmic reticulum-specific autophagic process, in selective removal of ER-associated degradation (ERAD) substrates. Plays a key role in ATG9 and ATG23 cycling through the pre-autophagosomal structure and is necessary to promote ATG18 binding to ATG9 through phosphorylation of ATG9. Catalyzes phosphorylation of ATG4, decreasing the interaction between ATG4 and ATG8 and impairing deconjugation of PE-conjugated forms of ATG8. Required for wild-type budding of haploid sporidia and for complete symptom development during pathogenic growth such as gall formation and teliospore production in ears of mature maize. The sequence is that of Serine/threonine-protein kinase ATG1 from Mycosarcoma maydis (Corn smut fungus).